The sequence spans 342 residues: Probable alcohol acetyltransferase (342 aa).

A mitochondrion-targeting transit peptide spans 1–38; it reads MMILGKAGILAQYGTIYVRQNTIRNNLSSCIFKQSLCA. The propeptide at 39-46 is removed in mature form; that stretch reads FHSLAKVL. In terms of domain architecture, AB hydrolase-1 spans 75–326; sequence PPIIILHGLF…AGHWVNAEKP (252 aa). Residues serine 152 and histidine 319 each act as charge relay system in the active site.

The protein belongs to the AB hydrolase superfamily. Post-translationally, processed by both the mitochondrial processing peptidase (MPP) and the mitochondrial octapeptidyl aminopeptidase (OCT1).

It is found in the mitochondrion. Its function is as follows. Probable alcohol acetyltransferase that uses acetyl-CoA to synthesize acetate esters from various alcohols. Not involved in the synthesis of ethyl acetate. This Saccharomyces cerevisiae (strain ATCC 204508 / S288c) (Baker's yeast) protein is Probable alcohol acetyltransferase (IMO32).